Consider the following 245-residue polypeptide: Dehydrogenase/reductase SDR family member 6 (245 aa).

NAD(+) contacts are provided by residues 16–18 (QGI), Asp37, and Asp58. Arg144 lines the substrate pocket. The active-site Proton acceptor is the Tyr147. NAD(+) contacts are provided by residues Lys151 and 180–184 (VDTPS). Positions 188 and 205 each coordinate substrate.

Belongs to the short-chain dehydrogenases/reductases (SDR) family. Homotetramer. As to expression, detected in liver (at protein level).

It localises to the cytoplasm. The catalysed reaction is cis-4-hydroxy-L-proline + NAD(+) = 4-oxo-L-proline + NADH + H(+). It catalyses the reaction (R)-3-hydroxybutanoate + NAD(+) = acetoacetate + NADH + H(+). It participates in amino-acid metabolism. The protein operates within siderophore biosynthesis. In terms of biological role, NAD(H)-dependent dehydrogenase/reductase with a preference for cyclic substrates. Catalyzes stereoselective conversion of 4-oxo-L-proline to cis-4-hydroxy-L-proline, likely a detoxification mechanism for ketoprolines. Mediates the formation of 2,5-dihydroxybenzoate (2,5-DHBA), a siderophore that chelates free cytoplasmic iron and associates with LCN2, thereby regulating iron transport and homeostasis while protecting cells against free radical-induced oxidative stress. The iron-siderophore complex is imported into mitochondria, providing an iron source for mitochondrial metabolic processes in particular heme synthesis. May act as a 3-hydroxybutyrate dehydrogenase. This Homo sapiens (Human) protein is Dehydrogenase/reductase SDR family member 6.